The following is a 494-amino-acid chain: Probable cobyric acid synthase (494 aa).

Positions 249-447 (SVRIAVIRLP…LHGIFFNRRF (199 aa)) constitute a GATase cobBQ-type domain. The active-site Nucleophile is cysteine 331. Histidine 439 is a catalytic residue.

It belongs to the CobB/CobQ family. CobQ subfamily.

Its pathway is cofactor biosynthesis; adenosylcobalamin biosynthesis. Its function is as follows. Catalyzes amidations at positions B, D, E, and G on adenosylcobyrinic A,C-diamide. NH(2) groups are provided by glutamine, and one molecule of ATP is hydrogenolyzed for each amidation. In Methanopyrus kandleri (strain AV19 / DSM 6324 / JCM 9639 / NBRC 100938), this protein is Probable cobyric acid synthase.